A 398-amino-acid chain; its full sequence is Carbamoyl phosphate synthase small chain (398 aa).

2 CPSase regions span residues 1 to 205 (MTQT…TNDA) and 1 to 207 (MTQT…DACN). Residues Ser60, Gly257, and Gly259 each contribute to the L-glutamine site. Residues 209–397 (HIVAIDYGIK…FNLIMDYKRT (189 aa)) enclose the Glutamine amidotransferase type-1 domain. The active-site Nucleophile is Cys286. Leu287, Gln290, Asn328, Gly330, and Phe331 together coordinate L-glutamine. Residues His370 and Glu372 contribute to the active site.

Belongs to the CarA family. As to quaternary structure, composed of two chains; the small (or glutamine) chain promotes the hydrolysis of glutamine to ammonia, which is used by the large (or ammonia) chain to synthesize carbamoyl phosphate. Tetramer of heterodimers (alpha,beta)4.

It catalyses the reaction hydrogencarbonate + L-glutamine + 2 ATP + H2O = carbamoyl phosphate + L-glutamate + 2 ADP + phosphate + 2 H(+). The enzyme catalyses L-glutamine + H2O = L-glutamate + NH4(+). Its pathway is amino-acid biosynthesis; L-arginine biosynthesis; carbamoyl phosphate from bicarbonate: step 1/1. The protein operates within pyrimidine metabolism; UMP biosynthesis via de novo pathway; (S)-dihydroorotate from bicarbonate: step 1/3. In terms of biological role, small subunit of the glutamine-dependent carbamoyl phosphate synthetase (CPSase). CPSase catalyzes the formation of carbamoyl phosphate from the ammonia moiety of glutamine, carbonate, and phosphate donated by ATP, constituting the first step of 2 biosynthetic pathways, one leading to arginine and/or urea and the other to pyrimidine nucleotides. The small subunit (glutamine amidotransferase) binds and cleaves glutamine to supply the large subunit with the substrate ammonia. The polypeptide is Carbamoyl phosphate synthase small chain (Bartonella quintana (strain Toulouse) (Rochalimaea quintana)).